The chain runs to 328 residues: Malate dehydrogenase (328 aa).

16 to 22 (GAAGQIS) contacts NAD(+). The substrate site is built by Arg-97 and Arg-103. NAD(+) contacts are provided by residues Asn-110, Gln-117, and 134 to 136 (VGN). Residues Asn-136 and Arg-167 each contribute to the substrate site. Catalysis depends on His-192, which acts as the Proton acceptor.

It belongs to the LDH/MDH superfamily. MDH type 2 family. In terms of assembly, homotetramer.

It catalyses the reaction (S)-malate + NAD(+) = oxaloacetate + NADH + H(+). Citrate activates the enzyme in the oxidation of malate to oxaloacetate and inhibits it in the reverse reaction. Functionally, catalyzes the reversible oxidation of malate to oxaloacetate. Exhibits higher catalytic efficiency for oxaloacetate reduction than for malate oxidation in vitro. Almost equally active both for NADH and NADPH on the bases of the kcat values at pH 6.5, but catalytic efficiency for oxaloacetate reduction is 50-fold higher with NADH. This chain is Malate dehydrogenase, found in Corynebacterium glutamicum (strain ATCC 13032 / DSM 20300 / JCM 1318 / BCRC 11384 / CCUG 27702 / LMG 3730 / NBRC 12168 / NCIMB 10025 / NRRL B-2784 / 534).